We begin with the raw amino-acid sequence, 274 residues long: NH(3)-dependent NAD(+) synthetase (274 aa).

An ATP-binding site is contributed by 46–53 (GISGGQDS). Residue Asp-52 participates in Mg(2+) binding. Arg-140 lines the deamido-NAD(+) pocket. Position 160 (Thr-160) interacts with ATP. Glu-165 contacts Mg(2+). Residues Lys-173 and Asp-180 each coordinate deamido-NAD(+). The ATP site is built by Lys-189 and Thr-211. 260-261 (HK) is a deamido-NAD(+) binding site.

The protein belongs to the NAD synthetase family. In terms of assembly, homodimer.

The catalysed reaction is deamido-NAD(+) + NH4(+) + ATP = AMP + diphosphate + NAD(+) + H(+). It functions in the pathway cofactor biosynthesis; NAD(+) biosynthesis; NAD(+) from deamido-NAD(+) (ammonia route): step 1/1. Functionally, catalyzes the ATP-dependent amidation of deamido-NAD to form NAD. Uses ammonia as a nitrogen source. The polypeptide is NH(3)-dependent NAD(+) synthetase (Streptococcus pneumoniae (strain Hungary19A-6)).